An 861-amino-acid polypeptide reads, in one-letter code: ATP-dependent helicase rhp16 (861 aa).

The segment covering 1 to 13 (MGTSCNKINSNSN) has biased composition (polar residues). Residues 1–217 (MGTSCNKINS…KSIPSHERTH (217 aa)) are disordered. Basic and acidic residues-rich tracts occupy residues 14 to 23 (KGKENMHFVL) and 38 to 57 (VERD…KEFE). Positions 60 to 82 (LSTNKKLIIQSNNTSSQHSTPPL) are enriched in polar residues. Residues 83–95 (SISDTSTHTGSST) are compositionally biased toward low complexity. Over residues 96–106 (DNVEANPNTGF) the composition is skewed to polar residues. A compositionally biased stretch (basic residues) spans 109–123 (ARKRSLRSSNLKKKF). The segment covering 131–145 (ESNESEFIDDDESDE) has biased composition (acidic residues). Low complexity predominate over residues 193–204 (ARASSSASSSSR). Positions 268-442 (RQEDSSFGGG…FSLLRFLRAD (175 aa)) constitute a Helicase ATP-binding domain. Residue 281 to 288 (DEMGMGKT) participates in ATP binding. Positions 393–396 (DEAH) match the DEAH box motif. The RING-type zinc-finger motif lies at 609-652 (CKICDEVAQDAIESRCHHTFCRLCVTEYINAAGDGENVNCPSCF). The 154-residue stretch at 695–848 (LVEELYLLRK…TIDQDEKALN (154 aa)) folds into the Helicase C-terminal domain.

It belongs to the SNF2/RAD54 helicase family.

The protein localises to the nucleus. Its function is as follows. Involved in global genome repair (GGR) via nucleotide excision repair (NER), in conjunction with rhp7, after UV irradiation. This is ATP-dependent helicase rhp16 (rhp16) from Schizosaccharomyces pombe (strain 972 / ATCC 24843) (Fission yeast).